A 169-amino-acid chain; its full sequence is ATP synthase subunit b (169 aa).

Residues 11-31 (KLPLGNMLFIIISFLVLMVIL) traverse the membrane as a helical segment.

This sequence belongs to the ATPase B chain family. F-type ATPases have 2 components, F(1) - the catalytic core - and F(0) - the membrane proton channel. F(1) has five subunits: alpha(3), beta(3), gamma(1), delta(1), epsilon(1). F(0) has three main subunits: a(1), b(2) and c(10-14). The alpha and beta chains form an alternating ring which encloses part of the gamma chain. F(1) is attached to F(0) by a central stalk formed by the gamma and epsilon chains, while a peripheral stalk is formed by the delta and b chains.

The protein localises to the cell membrane. Its function is as follows. F(1)F(0) ATP synthase produces ATP from ADP in the presence of a proton or sodium gradient. F-type ATPases consist of two structural domains, F(1) containing the extramembraneous catalytic core and F(0) containing the membrane proton channel, linked together by a central stalk and a peripheral stalk. During catalysis, ATP synthesis in the catalytic domain of F(1) is coupled via a rotary mechanism of the central stalk subunits to proton translocation. Component of the F(0) channel, it forms part of the peripheral stalk, linking F(1) to F(0). This is ATP synthase subunit b from Leuconostoc citreum (strain KM20).